We begin with the raw amino-acid sequence, 453 residues long: Probable glycine dehydrogenase (decarboxylating) subunit 1 (453 aa).

It belongs to the GcvP family. N-terminal subunit subfamily. The glycine cleavage system is composed of four proteins: P, T, L and H. In this organism, the P 'protein' is a heterodimer of two subunits.

It catalyses the reaction N(6)-[(R)-lipoyl]-L-lysyl-[glycine-cleavage complex H protein] + glycine + H(+) = N(6)-[(R)-S(8)-aminomethyldihydrolipoyl]-L-lysyl-[glycine-cleavage complex H protein] + CO2. In terms of biological role, the glycine cleavage system catalyzes the degradation of glycine. The P protein binds the alpha-amino group of glycine through its pyridoxal phosphate cofactor; CO(2) is released and the remaining methylamine moiety is then transferred to the lipoamide cofactor of the H protein. The polypeptide is Probable glycine dehydrogenase (decarboxylating) subunit 1 (Nitrosomonas europaea (strain ATCC 19718 / CIP 103999 / KCTC 2705 / NBRC 14298)).